The chain runs to 429 residues: Histidinol dehydrogenase (429 aa).

Residues tyrosine 131, glutamine 193, and asparagine 216 each contribute to the NAD(+) site. The substrate site is built by serine 239, glutamine 261, and histidine 264. Residues glutamine 261 and histidine 264 each contribute to the Zn(2+) site. Active-site proton acceptor residues include glutamate 327 and histidine 328. Substrate-binding residues include histidine 328, aspartate 361, glutamate 415, and histidine 420. A Zn(2+)-binding site is contributed by aspartate 361. Histidine 420 serves as a coordination point for Zn(2+).

This sequence belongs to the histidinol dehydrogenase family. Zn(2+) is required as a cofactor.

The enzyme catalyses L-histidinol + 2 NAD(+) + H2O = L-histidine + 2 NADH + 3 H(+). Its pathway is amino-acid biosynthesis; L-histidine biosynthesis; L-histidine from 5-phospho-alpha-D-ribose 1-diphosphate: step 9/9. Functionally, catalyzes the sequential NAD-dependent oxidations of L-histidinol to L-histidinaldehyde and then to L-histidine. In Methanocaldococcus jannaschii (strain ATCC 43067 / DSM 2661 / JAL-1 / JCM 10045 / NBRC 100440) (Methanococcus jannaschii), this protein is Histidinol dehydrogenase (hisD).